A 346-amino-acid polypeptide reads, in one-letter code: tRNA N6-adenosine threonylcarbamoyltransferase (346 aa).

Positions 111 and 115 each coordinate Fe cation. Residues 134–138, Asp167, Gly180, and Asn279 contribute to the substrate site; that span reads LVSGG. Asp307 contacts Fe cation.

This sequence belongs to the KAE1 / TsaD family. Fe(2+) is required as a cofactor.

The protein resides in the cytoplasm. It catalyses the reaction L-threonylcarbamoyladenylate + adenosine(37) in tRNA = N(6)-L-threonylcarbamoyladenosine(37) in tRNA + AMP + H(+). In terms of biological role, required for the formation of a threonylcarbamoyl group on adenosine at position 37 (t(6)A37) in tRNAs that read codons beginning with adenine. Is involved in the transfer of the threonylcarbamoyl moiety of threonylcarbamoyl-AMP (TC-AMP) to the N6 group of A37, together with TsaE and TsaB. TsaD likely plays a direct catalytic role in this reaction. The protein is tRNA N6-adenosine threonylcarbamoyltransferase of Burkholderia pseudomallei (strain 1106a).